Here is a 156-residue protein sequence, read N- to C-terminus: Small ribosomal subunit protein uS7 (156 aa).

The protein belongs to the universal ribosomal protein uS7 family. As to quaternary structure, part of the 30S ribosomal subunit. Contacts proteins S9 and S11.

Its function is as follows. One of the primary rRNA binding proteins, it binds directly to 16S rRNA where it nucleates assembly of the head domain of the 30S subunit. Is located at the subunit interface close to the decoding center, probably blocks exit of the E-site tRNA. This Deinococcus deserti (strain DSM 17065 / CIP 109153 / LMG 22923 / VCD115) protein is Small ribosomal subunit protein uS7.